The chain runs to 264 residues: Phosphatidylglycerol--prolipoprotein diacylglyceryl transferase (264 aa).

The next 4 membrane-spanning stretches (helical) occupy residues 17-37 (LAIH…YLLG), 57-77 (LIFY…VLFY), 89-109 (IAFL…VILV), and 118-138 (GVSF…GLGA). An a 1,2-diacyl-sn-glycero-3-phospho-(1'-sn-glycerol)-binding site is contributed by Arg-140. 3 consecutive transmembrane segments (helical) span residues 173-193 (PSQL…LWWF), 201-221 (GQVS…VEFT), and 237-257 (MGQW…VLTA).

It belongs to the Lgt family.

It is found in the cell inner membrane. The enzyme catalyses L-cysteinyl-[prolipoprotein] + a 1,2-diacyl-sn-glycero-3-phospho-(1'-sn-glycerol) = an S-1,2-diacyl-sn-glyceryl-L-cysteinyl-[prolipoprotein] + sn-glycerol 1-phosphate + H(+). Its pathway is protein modification; lipoprotein biosynthesis (diacylglyceryl transfer). In terms of biological role, catalyzes the transfer of the diacylglyceryl group from phosphatidylglycerol to the sulfhydryl group of the N-terminal cysteine of a prolipoprotein, the first step in the formation of mature lipoproteins. The protein is Phosphatidylglycerol--prolipoprotein diacylglyceryl transferase of Bordetella avium (strain 197N).